A 156-amino-acid polypeptide reads, in one-letter code: Ribosomal RNA large subunit methyltransferase H (156 aa).

S-adenosyl-L-methionine-binding positions include L73, G104, and 123 to 128 (LSKLTL).

This sequence belongs to the RNA methyltransferase RlmH family. In terms of assembly, homodimer.

It localises to the cytoplasm. It catalyses the reaction pseudouridine(1915) in 23S rRNA + S-adenosyl-L-methionine = N(3)-methylpseudouridine(1915) in 23S rRNA + S-adenosyl-L-homocysteine + H(+). In terms of biological role, specifically methylates the pseudouridine at position 1915 (m3Psi1915) in 23S rRNA. This Idiomarina loihiensis (strain ATCC BAA-735 / DSM 15497 / L2-TR) protein is Ribosomal RNA large subunit methyltransferase H.